Reading from the N-terminus, the 135-residue chain is Large ribosomal subunit protein mL41 (135 aa).

Residues Met-1 to Arg-13 constitute a mitochondrion transit peptide.

The protein belongs to the mitochondrion-specific ribosomal protein mL41 family. Component of the mitochondrial ribosome large subunit (39S) which comprises a 16S rRNA and about 50 distinct proteins. Interacts with BCL2.

Its subcellular location is the mitochondrion. In terms of biological role, component of the mitochondrial ribosome large subunit. Also involved in apoptosis and cell cycle. Enhances p53/TP53 stability, thereby contributing to p53/TP53-induced apoptosis in response to growth-inhibitory condition. Enhances p53/TP53 translocation to the mitochondria. Has the ability to arrest the cell cycle at the G1 phase, possibly by stabilizing the CDKN1A and CDKN1B (p27Kip1) proteins. The polypeptide is Large ribosomal subunit protein mL41 (Mrpl41) (Mus musculus (Mouse)).